The primary structure comprises 176 residues: Mitochondrial inner membrane protein Mpv17 (176 aa).

The next 4 membrane-spanning stretches (helical) occupy residues 18-38 (VQVLTAGSLMGLGDIISQQLV), 57-77 (LGCGFVGPVVGGWYRVLDHLI), 94-114 (GGFAPCFLGCFLPLVGVLNGM), and 131-151 (LITNYYLWPAVQLANFYLVPL).

This sequence belongs to the peroxisomal membrane protein PXMP2/4 family.

The protein resides in the mitochondrion inner membrane. Functionally, non-selective channel that modulates the membrane potential under normal conditions and oxidative stress, and is involved in mitochondrial homeostasis. Involved in mitochondrial deoxynucleoside triphosphates (dNTP) pool homeostasis and mitochondrial DNA (mtDNA) maintenance. May be involved in the regulation of reactive oxygen species metabolism and the control of oxidative phosphorylation. In Rattus norvegicus (Rat), this protein is Mitochondrial inner membrane protein Mpv17.